The following is a 295-amino-acid chain: ATP synthase gamma chain (295 aa).

The protein belongs to the ATPase gamma chain family. As to quaternary structure, F-type ATPases have 2 components, CF(1) - the catalytic core - and CF(0) - the membrane proton channel. CF(1) has five subunits: alpha(3), beta(3), gamma(1), delta(1), epsilon(1). CF(0) has three main subunits: a, b and c.

Its subcellular location is the cell membrane. Functionally, produces ATP from ADP in the presence of a proton gradient across the membrane. The gamma chain is believed to be important in regulating ATPase activity and the flow of protons through the CF(0) complex. This is ATP synthase gamma chain from Desulforudis audaxviator (strain MP104C).